A 433-amino-acid polypeptide reads, in one-letter code: Enolase (433 aa).

Gln-166 contributes to the (2R)-2-phosphoglycerate binding site. Residue Glu-208 is the Proton donor of the active site. Mg(2+) is bound by residues Asp-245, Glu-289, and Asp-316. The (2R)-2-phosphoglycerate site is built by Lys-341, Arg-370, Ser-371, and Lys-392. The active-site Proton acceptor is the Lys-341.

This sequence belongs to the enolase family. It depends on Mg(2+) as a cofactor.

It localises to the cytoplasm. The protein resides in the secreted. Its subcellular location is the cell surface. The catalysed reaction is (2R)-2-phosphoglycerate = phosphoenolpyruvate + H2O. It functions in the pathway carbohydrate degradation; glycolysis; pyruvate from D-glyceraldehyde 3-phosphate: step 4/5. Functionally, catalyzes the reversible conversion of 2-phosphoglycerate (2-PG) into phosphoenolpyruvate (PEP). It is essential for the degradation of carbohydrates via glycolysis. The protein is Enolase of Acetivibrio thermocellus (strain ATCC 27405 / DSM 1237 / JCM 9322 / NBRC 103400 / NCIMB 10682 / NRRL B-4536 / VPI 7372) (Clostridium thermocellum).